We begin with the raw amino-acid sequence, 216 residues long: Kynurenine formamidase (216 aa).

A substrate-binding site is contributed by Trp-25. The Zn(2+) site is built by His-55, His-59, and Asp-61. The active-site Proton donor/acceptor is the His-65. Residues His-167 and Glu-179 each contribute to the Zn(2+) site.

The protein belongs to the Cyclase 1 superfamily. KynB family. Homodimer. Requires Zn(2+) as cofactor.

It carries out the reaction N-formyl-L-kynurenine + H2O = L-kynurenine + formate + H(+). The protein operates within amino-acid degradation; L-tryptophan degradation via kynurenine pathway; L-kynurenine from L-tryptophan: step 2/2. In terms of biological role, catalyzes the hydrolysis of N-formyl-L-kynurenine to L-kynurenine, the second step in the kynurenine pathway of tryptophan degradation. The sequence is that of Kynurenine formamidase from Cupriavidus necator (strain ATCC 17699 / DSM 428 / KCTC 22496 / NCIMB 10442 / H16 / Stanier 337) (Ralstonia eutropha).